A 146-amino-acid polypeptide reads, in one-letter code: Large ribosomal subunit protein uL15 (146 aa).

The segment covering M1 to R13 has biased composition (basic and acidic residues). Positions M1–L57 are disordered. 2 stretches are compositionally biased toward gly residues: residues R21–A31 and S42–G52.

It belongs to the universal ribosomal protein uL15 family. As to quaternary structure, part of the 50S ribosomal subunit.

Binds to the 23S rRNA. The polypeptide is Large ribosomal subunit protein uL15 (Bacillus subtilis (strain 168)).